A 127-amino-acid chain; its full sequence is Fluoride-specific ion channel FluC 1 (127 aa).

4 consecutive transmembrane segments (helical) span residues leucine 3–tryptophan 23, isoleucine 35–tyrosine 55, isoleucine 74–isoleucine 94, and leucine 102–tyrosine 122. Na(+) is bound by residues glycine 78 and threonine 81.

The protein belongs to the fluoride channel Fluc/FEX (TC 1.A.43) family.

It localises to the cell membrane. It catalyses the reaction fluoride(in) = fluoride(out). Na(+) is not transported, but it plays an essential structural role and its presence is essential for fluoride channel function. Functionally, fluoride-specific ion channel. Important for reducing fluoride concentration in the cell, thus reducing its toxicity. This chain is Fluoride-specific ion channel FluC 1, found in Halalkalibacterium halodurans (strain ATCC BAA-125 / DSM 18197 / FERM 7344 / JCM 9153 / C-125) (Bacillus halodurans).